The following is a 196-amino-acid chain: Glycerol-3-phosphate acyltransferase 2 (196 aa).

5 consecutive transmembrane segments (helical) span residues 2-22 (GWWLFPILGYFIGSIPFSYLI), 52-72 (VGGICLLLDALKGFFPVFITI), 80-100 (IVSLTAIATVLGHDFPIFMKF), 112-132 (IIFCLSWPTGLVFTLTWLVIV), and 137-156 (YASLGSLVALYVSALLGYLL).

Belongs to the PlsY family. In terms of assembly, probably interacts with PlsX.

The protein resides in the cell inner membrane. It carries out the reaction an acyl phosphate + sn-glycerol 3-phosphate = a 1-acyl-sn-glycero-3-phosphate + phosphate. It functions in the pathway lipid metabolism; phospholipid metabolism. Functionally, catalyzes the transfer of an acyl group from acyl-phosphate (acyl-PO(4)) to glycerol-3-phosphate (G3P) to form lysophosphatidic acid (LPA). This enzyme utilizes acyl-phosphate as fatty acyl donor, but not acyl-CoA or acyl-ACP. In Thermotoga maritima (strain ATCC 43589 / DSM 3109 / JCM 10099 / NBRC 100826 / MSB8), this protein is Glycerol-3-phosphate acyltransferase 2.